The following is a 167-amino-acid chain: Troponin C-akin-1 protein (167 aa).

17-20 (YGAL) contributes to the substrate binding site. Residue E92 is the Proton acceptor of the active site.

The protein belongs to the gamma-glutamylcyclotransferase family. As to expression, in embryos, expression is seen in heart cells of the dorsal vessel and hindgut visceral mesoderm.

In terms of biological role, putative gamma-glutamylcyclotransferase. The sequence is that of Troponin C-akin-1 protein (Tina-1) from Drosophila melanogaster (Fruit fly).